The sequence spans 908 residues: Collagen alpha-2(I) chain (908 aa).

The segment covering 1–36 has biased composition (low complexity); that stretch reads GPMGIMGPRGPPGASGAPGPAGEPGEPGQTGPAGAR. 2 disordered regions span residues 1–211 and 227–908; these read GPMG…GITG and IPGP…PGPS. Basic and acidic residues predominate over residues 45–59; that stretch reads AGEDGHPGKPGRPGE. 8 stretches are compositionally biased toward low complexity: residues 129–158, 183–197, 234–249, 293–309, 403–418, 465–474, 526–542, and 569–589; these read VGAP…SAGP, AGPR…VSGP, PGPV…RGIV, STGP…RGIP, AGIA…PGFQ, PAGPIGSRGP, RRGA…AGAN, and VGPA…QPGA. The segment covering 590–599 has biased composition (basic and acidic residues); sequence KGERGTKGPK. A compositionally biased stretch (low complexity) spans 602 to 617; that stretch reads NGPVGPTGPVGAAGPA. Residues 627–636 show a composition bias toward gly residues; it reads GSRGDGGPPG. Composition is skewed to low complexity over residues 637–647, 701–730, 745–775, and 785–805; these read ATGFPGAAGRT, AGEP…IPGS, EPGP…APGE, and PGPA…PSGP. Over residues 809–820 the composition is skewed to basic and acidic residues; that stretch reads RGDKGEPGDKGP. Positions 893-908 are enriched in pro residues; sequence AGPPGPPGPPGPPGPS.

This sequence belongs to the fibrillar collagen family. As to quaternary structure, trimers of one alpha 2(I) and two alpha 1(I) chains. Interacts (via C-terminus) with TMEM131 (via PapD-L domain); the interaction is direct and is involved in assembly and TRAPPIII ER-to-Golgi transport complex-dependent secretion of collagen. In terms of processing, prolines at the third position of the tripeptide repeating unit (G-X-Y) are hydroxylated in some or all of the chains. As to expression, forms the fibrils of tendon, ligaments and bones. In bones, the fibrils are mineralized with calcium hydroxyapatite.

Its subcellular location is the secreted. The protein localises to the extracellular space. The protein resides in the extracellular matrix. Its function is as follows. Type I collagen is a member of group I collagen (fibrillar forming collagen). The sequence is that of Collagen alpha-2(I) chain from Toxodon sp.